The sequence spans 234 residues: Small ribosomal subunit protein uS2 (234 aa).

This sequence belongs to the universal ribosomal protein uS2 family.

This is Small ribosomal subunit protein uS2 from Clostridium kluyveri (strain NBRC 12016).